The sequence spans 488 residues: NADH-ubiquinone oxidoreductase chain 2 (488 aa).

14 consecutive transmembrane segments (helical) span residues 11-31 (MIKY…SISI), 38-58 (MMLL…LLTI), 74-94 (ELIT…ISMF), 106-126 (ITEE…ISME), 129-149 (NLIT…ILAL), 162-182 (LKYY…IVSI), 211-231 (IALI…HGWL), 239-259 (GMLM…IVLI), 271-291 (IEVI…VGTV), 299-319 (VIRF…LFFV), 331-351 (IYYL…IIGV), 376-396 (IGIS…FTNF), 412-434 (IYIT…NVVK), and 460-480 (IVGG…IISI).

It belongs to the complex I subunit 2 family.

It is found in the mitochondrion inner membrane. The catalysed reaction is a ubiquinone + NADH + 5 H(+)(in) = a ubiquinol + NAD(+) + 4 H(+)(out). In terms of biological role, core subunit of the mitochondrial membrane respiratory chain NADH dehydrogenase (Complex I) that is believed to belong to the minimal assembly required for catalysis. Complex I functions in the transfer of electrons from NADH to the respiratory chain. The immediate electron acceptor for the enzyme is believed to be ubiquinone. The chain is NADH-ubiquinone oxidoreductase chain 2 (nad2) from Dictyostelium discoideum (Social amoeba).